The following is a 527-amino-acid chain: Peptide chain release factor 3 (527 aa).

The tr-type G domain maps to 9–277 (AKRRTFAIIS…CIVDWAPQPL (269 aa)). GTP-binding positions include 18–25 (SHPDAGKT), 86–90 (DTPGH), and 140–143 (NKLD).

It belongs to the TRAFAC class translation factor GTPase superfamily. Classic translation factor GTPase family. PrfC subfamily.

Its subcellular location is the cytoplasm. Functionally, increases the formation of ribosomal termination complexes and stimulates activities of RF-1 and RF-2. It binds guanine nucleotides and has strong preference for UGA stop codons. It may interact directly with the ribosome. The stimulation of RF-1 and RF-2 is significantly reduced by GTP and GDP, but not by GMP. The polypeptide is Peptide chain release factor 3 (Pseudomonas paraeruginosa (strain DSM 24068 / PA7) (Pseudomonas aeruginosa (strain PA7))).